Reading from the N-terminus, the 378-residue chain is MELKKLMEHISIIPDYRQAWKVEHKLSGILLLTIFAVISGAESWEDIEDFGETHLDFLKQYGDFENGIPVHDTIARVVSCISPAKFHECFINWMRDCHSSNDKDVIAIDGKTLRHSYDKSRRRGAIHVISAFSTMHSLVIGQIKTDKKSNEITAIPELLNMLDIKGKIITTDAMGCQKDIAEKIQKQGGDYLFAVKGNQGRLNKAFEEKFPLKELNNPEHDSYAMSEKSHGREEIRLHIVCDVPDELIDFTFEWKGLKKLCVAVSFRSIIAEQKKEPEMTVRYYISSADLTAEKFATAIRNHWHVENKLHWRLDVVMNEDDCKIRRGNAAELFSGIRHIAINILTNDKVFKAGLRRKMRKAAMDRNYLASVLAGSGLS.

Belongs to the transposase 11 family.

This Escherichia coli (strain K12) protein is Putative protein YbfL (ybfL).